Reading from the N-terminus, the 500-residue chain is AMP phosphorylase (500 aa).

AMP contacts are provided by residues Gly166, 192–197 (SRAVTS), and Thr201. Residue Asp254 is the Proton donor of the active site. 2 residues coordinate AMP: Ser262 and Lys286.

This sequence belongs to the thymidine/pyrimidine-nucleoside phosphorylase family. Type 2 subfamily.

The enzyme catalyses AMP + phosphate = alpha-D-ribose 1,5-bisphosphate + adenine. It carries out the reaction CMP + phosphate = cytosine + alpha-D-ribose 1,5-bisphosphate. It catalyses the reaction UMP + phosphate = alpha-D-ribose 1,5-bisphosphate + uracil. Functionally, catalyzes the conversion of AMP and phosphate to adenine and ribose 1,5-bisphosphate (R15P). Exhibits phosphorylase activity toward CMP and UMP in addition to AMP. Functions in an archaeal AMP degradation pathway, together with R15P isomerase and RubisCO. The protein is AMP phosphorylase (deoA) of Natronomonas pharaonis (strain ATCC 35678 / DSM 2160 / CIP 103997 / JCM 8858 / NBRC 14720 / NCIMB 2260 / Gabara) (Halobacterium pharaonis).